We begin with the raw amino-acid sequence, 3456 residues long: Genome polyprotein (3456 aa).

The Peptidase S30 domain occupies 600-743; the sequence is NVANIPLDDF…ATRLKQIQFY (144 aa). Residues His-640, Asp-652, and Ser-689 each act as for P1 proteinase activity in the active site. Residues 1075–1196 form the Peptidase C6 domain; the sequence is VWEFNEGYCY…EGEMLTYKVG (122 aa). Catalysis depends on Cys-1083, which acts as the For helper component proteinase activity. The HAT 1 repeat unit spans residues 1094–1126; that stretch reads FINEDEMEFYKNQMNQIVLNLGAWPTFEQYLVE. Residue His-1155 is the For helper component proteinase activity of the active site. Residues 1617-1768 form the Helicase ATP-binding domain; that stretch reads NIRTSGETDV…TRHKIKVETL (152 aa). Position 1630–1637 (1630–1637) interacts with ATP; sequence SGVGGGKS. Positions 1787-1947 constitute a Helicase C-terminal domain; it reads DATSVGDVIL…GIKPVCDRVD (161 aa). Tyr-2304 carries the O-(5'-phospho-RNA)-tyrosine modification. Residues 2412–2636 enclose the Peptidase C4 domain; that stretch reads AVDSHVGTPT…VEWSRLLPTT (225 aa). Active-site for nuclear inclusion protein A activity residues include His-2457, Asp-2494, and Cys-2566. The HAT 2 repeat unit spans residues 2597-2629; sequence HIFEPVNETFIEMLAKMEYAKGFWKFNPELVEW. The region spanning 2891-3011 is the RdRp catalytic domain; the sequence is WVFIDCDGSR…NCPRSTANAI (121 aa). The HAT 3 repeat unit spans residues 3082 to 3115; sequence LNAAYIESFGYEDLMTEIEKFAHFWAKKHGLNDV.

VPg is uridylylated by the polymerase and is covalently attached to the 5'-end of the genomic RNA. This uridylylated form acts as a nucleotide-peptide primer for the polymerase. In terms of processing, genome polyprotein of potyviruses undergoes post-translational proteolytic processing by the main proteinase NIa-pro resulting in the production of at least ten individual proteins. The P1 proteinase and the HC-pro cleave only their respective C-termini autocatalytically. 6K1 is essential for proper proteolytic separation of P3 from CI.

The protein resides in the host cytoplasmic vesicle. The protein localises to the virion. It catalyses the reaction RNA(n) + a ribonucleoside 5'-triphosphate = RNA(n+1) + diphosphate. The catalysed reaction is Hydrolyzes glutaminyl bonds, and activity is further restricted by preferences for the amino acids in P6 - P1' that vary with the species of potyvirus, e.g. Glu-Xaa-Xaa-Tyr-Xaa-Gln-|-(Ser or Gly) for the enzyme from tobacco etch virus. The natural substrate is the viral polyprotein, but other proteins and oligopeptides containing the appropriate consensus sequence are also cleaved.. The enzyme catalyses Hydrolyzes a Gly-|-Gly bond at its own C-terminus, commonly in the sequence -Tyr-Xaa-Val-Gly-|-Gly, in the processing of the potyviral polyprotein.. In terms of biological role, required for aphid transmission and also has proteolytic activity. Only cleaves a Gly-Gly dipeptide at its own C-terminus. Interacts with virions and aphid stylets. Acts as a suppressor of RNA-mediated gene silencing, also known as post-transcriptional gene silencing (PTGS), a mechanism of plant viral defense that limits the accumulation of viral RNAs. May have RNA-binding activity. Its function is as follows. Has helicase activity. It may be involved in replication. Functionally, indispensable for virus replication. Mediates the cap-independent, EIF4E-dependent translation of viral genomic RNAs. Binds to the cap-binding site of host EIF4E and thus interferes with the host EIF4E-dependent mRNA export and translation. VPg-RNA directly binds EIF4E and is a template for transcription. Also forms trimeric complexes with EIF4E-EIF4G, which are templates for translation. In terms of biological role, has RNA-binding and proteolytic activities. Its function is as follows. An RNA-dependent RNA polymerase that plays an essential role in the virus replication. Functionally, involved in aphid transmission, cell-to-cell and systemis movement, encapsidation of the viral RNA and in the regulation of viral RNA amplification. The protein is Genome polyprotein of Sweet potato mild mottle virus (isolate Salazar) (SPMMV).